The chain runs to 117 residues: Holo-[acyl-carrier-protein] synthase (117 aa).

Residues Asp-8 and Glu-58 each contribute to the Mg(2+) site.

This sequence belongs to the P-Pant transferase superfamily. AcpS family. It depends on Mg(2+) as a cofactor.

Its subcellular location is the cytoplasm. The enzyme catalyses apo-[ACP] + CoA = holo-[ACP] + adenosine 3',5'-bisphosphate + H(+). Functionally, transfers the 4'-phosphopantetheine moiety from coenzyme A to a Ser of acyl-carrier-protein. The chain is Holo-[acyl-carrier-protein] synthase from Shouchella clausii (strain KSM-K16) (Alkalihalobacillus clausii).